Here is a 94-residue protein sequence, read N- to C-terminus: Small ribosomal subunit protein uS19 (94 aa).

Belongs to the universal ribosomal protein uS19 family.

Its function is as follows. Protein S19 forms a complex with S13 that binds strongly to the 16S ribosomal RNA. The polypeptide is Small ribosomal subunit protein uS19 (Desulforudis audaxviator (strain MP104C)).